A 228-amino-acid chain; its full sequence is UPF0758 protein Reut_A2732 (228 aa).

The 123-residue stretch at 102–224 folds into the MPN domain; it reads GLDSPAAVRS…VHSFAEHGEL (123 aa). Zn(2+) contacts are provided by H173, H175, and D186. Residues 173–186 carry the JAMM motif motif; that stretch reads HNHPSGCCTPSQSD.

The protein belongs to the UPF0758 family.

The chain is UPF0758 protein Reut_A2732 from Cupriavidus pinatubonensis (strain JMP 134 / LMG 1197) (Cupriavidus necator (strain JMP 134)).